The primary structure comprises 260 residues: Pyridoxine 5'-phosphate synthase (260 aa).

Asparagine 15 lines the 3-amino-2-oxopropyl phosphate pocket. 17 to 18 (DH) is a 1-deoxy-D-xylulose 5-phosphate binding site. Residue arginine 26 coordinates 3-amino-2-oxopropyl phosphate. The Proton acceptor role is filled by histidine 51. Positions 53 and 58 each coordinate 1-deoxy-D-xylulose 5-phosphate. Glutamate 78 acts as the Proton acceptor in catalysis. Threonine 108 serves as a coordination point for 1-deoxy-D-xylulose 5-phosphate. The Proton donor role is filled by histidine 199. 3-amino-2-oxopropyl phosphate-binding positions include glycine 200 and 221-222 (GH).

This sequence belongs to the PNP synthase family. Homooctamer; tetramer of dimers.

The protein resides in the cytoplasm. It catalyses the reaction 3-amino-2-oxopropyl phosphate + 1-deoxy-D-xylulose 5-phosphate = pyridoxine 5'-phosphate + phosphate + 2 H2O + H(+). The protein operates within cofactor biosynthesis; pyridoxine 5'-phosphate biosynthesis; pyridoxine 5'-phosphate from D-erythrose 4-phosphate: step 5/5. Functionally, catalyzes the complicated ring closure reaction between the two acyclic compounds 1-deoxy-D-xylulose-5-phosphate (DXP) and 3-amino-2-oxopropyl phosphate (1-amino-acetone-3-phosphate or AAP) to form pyridoxine 5'-phosphate (PNP) and inorganic phosphate. The protein is Pyridoxine 5'-phosphate synthase of Cupriavidus taiwanensis (strain DSM 17343 / BCRC 17206 / CCUG 44338 / CIP 107171 / LMG 19424 / R1) (Ralstonia taiwanensis (strain LMG 19424)).